We begin with the raw amino-acid sequence, 161 residues long: MQVFIMRHGDAALDAASDSVRPLTTNGCDESRLMANWLKGQKVEIERVLVSPFLRAEQTLEEVGDCLNLPSSAEVLPELTPCGDVGLVSAYLQALTNEGVASVLVISHLPLVGYLVAELCPGETPPMFTTSAIASVTLDESGNGTFNWQMSPCNLKMAKAI.

It belongs to the SixA phosphatase family.

Functionally, exhibits phosphohistidine phosphatase activity towards the HPt domain of the ArcB sensor involved in the multistep His-Asp phosphorelay. This chain is Phosphohistidine phosphatase SixA (sixA), found in Escherichia coli (strain K12).